A 400-amino-acid polypeptide reads, in one-letter code: tRNA(Met) cytidine acetate ligase (400 aa).

ATP is bound by residues isoleucine 7–histidine 20, glycine 102, asparagine 165, and arginine 190.

The protein belongs to the TmcAL family.

Its subcellular location is the cytoplasm. It catalyses the reaction cytidine(34) in elongator tRNA(Met) + acetate + ATP = N(4)-acetylcytidine(34) in elongator tRNA(Met) + AMP + diphosphate. Functionally, catalyzes the formation of N(4)-acetylcytidine (ac(4)C) at the wobble position of elongator tRNA(Met), using acetate and ATP as substrates. First activates an acetate ion to form acetyladenylate (Ac-AMP) and then transfers the acetyl group to tRNA to form ac(4)C34. This is tRNA(Met) cytidine acetate ligase from Clostridium novyi (strain NT).